A 213-amino-acid polypeptide reads, in one-letter code: MARYIGPKLKLSRREGTDLGLKSGVKPYDVKTKKSARPPGQHGVSRNKSSEYSLQLREKQKVKRIYGVLERQFANYYKEAARKRGATGENLLAMLESRLDNVVYRMGFGSTRAEARQLVSHRTVMVKKAGRDEFIRVNIPSIQLQDGDVIAIQEKSREQLRIKNAIELATQRGIPEWLDVDHSKLQGTFKKAPDRIDLPAEINESLIVELYSK.

The segment at 16 to 53 (GTDLGLKSGVKPYDVKTKKSARPPGQHGVSRNKSSEYS) is disordered. The segment covering 44-53 (VSRNKSSEYS) has biased composition (polar residues). The 67-residue stretch at 97-163 (SRLDNVVYRM…EKSREQLRIK (67 aa)) folds into the S4 RNA-binding domain.

It belongs to the universal ribosomal protein uS4 family. Part of the 30S ribosomal subunit. Contacts protein S5. The interaction surface between S4 and S5 is involved in control of translational fidelity.

Its function is as follows. One of the primary rRNA binding proteins, it binds directly to 16S rRNA where it nucleates assembly of the body of the 30S subunit. In terms of biological role, with S5 and S12 plays an important role in translational accuracy. The chain is Small ribosomal subunit protein uS4 from Psychrobacter cryohalolentis (strain ATCC BAA-1226 / DSM 17306 / VKM B-2378 / K5).